The sequence spans 202 residues: Inner membrane-spanning protein YciB (202 aa).

A run of 5 helical transmembrane segments spans residues 47-67 (ILLATVVVIAATVAQIIWVHF), 75-95 (MLWVSLVLVVVFGGLTLAFQN), 101-121 (WKPTILYWVFAGSMIFSAFIL), 146-166 (LSWIGFFLFMGALNLFVAFNF), and 174-194 (FKLFGGMGLMLVFVLGQGMLL).

Belongs to the YciB family.

The protein resides in the cell inner membrane. Plays a role in cell envelope biogenesis, maintenance of cell envelope integrity and membrane homeostasis. This Dechloromonas aromatica (strain RCB) protein is Inner membrane-spanning protein YciB.